Consider the following 262-residue polypeptide: Methylthioribulose-1-phosphate dehydratase (262 aa).

C115 is a binding site for substrate. H133 and H135 together coordinate Zn(2+). The Proton donor/acceptor role is filled by E158. Zn(2+) is bound at residue H223.

This sequence belongs to the aldolase class II family. MtnB subfamily. The cofactor is Zn(2+).

The protein localises to the cytoplasm. It carries out the reaction 5-(methylsulfanyl)-D-ribulose 1-phosphate = 5-methylsulfanyl-2,3-dioxopentyl phosphate + H2O. It participates in amino-acid biosynthesis; L-methionine biosynthesis via salvage pathway; L-methionine from S-methyl-5-thio-alpha-D-ribose 1-phosphate: step 2/6. In terms of biological role, catalyzes the dehydration of methylthioribulose-1-phosphate (MTRu-1-P) into 2,3-diketo-5-methylthiopentyl-1-phosphate (DK-MTP-1-P). The sequence is that of Methylthioribulose-1-phosphate dehydratase from Meyerozyma guilliermondii (strain ATCC 6260 / CBS 566 / DSM 6381 / JCM 1539 / NBRC 10279 / NRRL Y-324) (Yeast).